A 340-amino-acid chain; its full sequence is Ketol-acid reductoisomerase (NADP(+)) (340 aa).

The region spanning 3 to 183 (LSVYYDKDCN…GGGRTGIIET (181 aa)) is the KARI N-terminal Rossmann domain. NADP(+)-binding positions include 26 to 29 (FGSQ), S54, and 84 to 87 (DELQ). H109 is an active-site residue. Residue G135 participates in NADP(+) binding. Residues 184-329 (TFKDETETDL…ERLRAMMPWI (146 aa)) enclose the KARI C-terminal knotted domain. Residues D192, E196, E228, and E232 each contribute to the Mg(2+) site. S253 lines the substrate pocket.

This sequence belongs to the ketol-acid reductoisomerase family. Mg(2+) serves as cofactor.

It catalyses the reaction (2R)-2,3-dihydroxy-3-methylbutanoate + NADP(+) = (2S)-2-acetolactate + NADPH + H(+). The catalysed reaction is (2R,3R)-2,3-dihydroxy-3-methylpentanoate + NADP(+) = (S)-2-ethyl-2-hydroxy-3-oxobutanoate + NADPH + H(+). The protein operates within amino-acid biosynthesis; L-isoleucine biosynthesis; L-isoleucine from 2-oxobutanoate: step 2/4. It functions in the pathway amino-acid biosynthesis; L-valine biosynthesis; L-valine from pyruvate: step 2/4. Functionally, involved in the biosynthesis of branched-chain amino acids (BCAA). Catalyzes an alkyl-migration followed by a ketol-acid reduction of (S)-2-acetolactate (S2AL) to yield (R)-2,3-dihydroxy-isovalerate. In the isomerase reaction, S2AL is rearranged via a Mg-dependent methyl migration to produce 3-hydroxy-3-methyl-2-ketobutyrate (HMKB). In the reductase reaction, this 2-ketoacid undergoes a metal-dependent reduction by NADPH to yield (R)-2,3-dihydroxy-isovalerate. This Wolinella succinogenes (strain ATCC 29543 / DSM 1740 / CCUG 13145 / JCM 31913 / LMG 7466 / NCTC 11488 / FDC 602W) (Vibrio succinogenes) protein is Ketol-acid reductoisomerase (NADP(+)).